A 411-amino-acid chain; its full sequence is UPF0597 protein Fnod_1278 (411 aa).

Belongs to the UPF0597 family.

This is UPF0597 protein Fnod_1278 from Fervidobacterium nodosum (strain ATCC 35602 / DSM 5306 / Rt17-B1).